The primary structure comprises 400 residues: GTPase Obg (400 aa).

In terms of domain architecture, Obg spans 1–159; sequence MKFVDEVQIR…RTLKLELLLL (159 aa). The 174-residue stretch at 160–333 folds into the OBG-type G domain; that stretch reads ADVGMLGLPN…VCYDILDLLD (174 aa). GTP contacts are provided by residues 166-173, 191-195, 213-216, 283-286, and 314-316; these read GLPNAGKS, FTTLV, DIPG, NKMD, and TAI. Residues S173 and T193 each coordinate Mg(2+).

It belongs to the TRAFAC class OBG-HflX-like GTPase superfamily. OBG GTPase family. Monomer. Mg(2+) is required as a cofactor.

The protein resides in the cytoplasm. Functionally, an essential GTPase which binds GTP, GDP and possibly (p)ppGpp with moderate affinity, with high nucleotide exchange rates and a fairly low GTP hydrolysis rate. Plays a role in control of the cell cycle, stress response, ribosome biogenesis and in those bacteria that undergo differentiation, in morphogenesis control. The protein is GTPase Obg of Aeromonas hydrophila subsp. hydrophila (strain ATCC 7966 / DSM 30187 / BCRC 13018 / CCUG 14551 / JCM 1027 / KCTC 2358 / NCIMB 9240 / NCTC 8049).